The chain runs to 103 residues: MTYVLDTNVVSALRVPGRHPAVAAWADSVQVAEQFVVAITLAEIERGVIAKERTDPTQSEHLRRWFDDKVLRIFVFARRGTNLIMQPLAGHIGYSLYSGISWF.

Residues 3–74 enclose the PINc domain; the sequence is YVLDTNVVSA…WFDDKVLRIF (72 aa). Aspartate 6 lines the Mg(2+) pocket.

It belongs to the PINc/VapC protein family. The cofactor is Mg(2+).

Toxic component of a type II toxin-antitoxin (TA) system. An RNase. The cognate antitoxin is VapB14. This is Ribonuclease VapC14 (vapC14) from Mycobacterium tuberculosis (strain CDC 1551 / Oshkosh).